The primary structure comprises 395 residues: Elongation factor Tu (395 aa).

A tr-type G domain is found at 10–204 (KPHVNIGTIG…AVDEYIPTPQ (195 aa)). Residues 19–26 (GHVDHGKT) are G1. Position 19–26 (19–26 (GHVDHGKT)) interacts with GTP. Mg(2+) is bound at residue threonine 26. Positions 60-64 (GITIS) are G2. The G3 stretch occupies residues 81–84 (DCPG). GTP contacts are provided by residues 81-85 (DCPGH) and 136-139 (NKCD). A G4 region spans residues 136–139 (NKCD). The interval 174–176 (SAL) is G5.

Belongs to the TRAFAC class translation factor GTPase superfamily. Classic translation factor GTPase family. EF-Tu/EF-1A subfamily. As to quaternary structure, monomer.

Its subcellular location is the cytoplasm. It carries out the reaction GTP + H2O = GDP + phosphate + H(+). GTP hydrolase that promotes the GTP-dependent binding of aminoacyl-tRNA to the A-site of ribosomes during protein biosynthesis. The polypeptide is Elongation factor Tu (Geobacillus stearothermophilus (Bacillus stearothermophilus)).